The following is a 204-amino-acid chain: MTKSSRPQSISDSVSVAGSQGTLDDLRARVASVPEAPTREPVDSRDEQAWSYCLRLLTSRARTRAELTERLARRGYPDDVSERIMDRLATAGLVNDADFATQWVQSRHTYSGKGKRALAAELRTKGVSAENAAAALAQIDGEAERSRAAELVTKKLRSENLDDGGIKAARRLVAMLARRGYGQSMAYDVVKNALASEKDRRDVG.

The segment covering 1-22 (MTKSSRPQSISDSVSVAGSQGT) has biased composition (polar residues). Positions 1-44 (MTKSSRPQSISDSVSVAGSQGTLDDLRARVASVPEAPTREPVDS) are disordered.

Belongs to the RecX family.

It localises to the cytoplasm. Modulates RecA activity. The polypeptide is Regulatory protein RecX (Mycobacteroides abscessus (strain ATCC 19977 / DSM 44196 / CCUG 20993 / CIP 104536 / JCM 13569 / NCTC 13031 / TMC 1543 / L948) (Mycobacterium abscessus)).